Reading from the N-terminus, the 341-residue chain is NADH-quinone oxidoreductase subunit H (341 aa).

8 helical membrane passes run 38–58 (PSVVGPFGLLQPFADAIKLLV), 70–90 (ILFIMAPMLTFILALIVWAVI), 115–135 (IGVLYVLAISSLGIYGIIVAG), 161–181 (MGLIVATVVITTGTLNLGEMV), 187–207 (MPFWIDLLMMPIGVVFFISLL), 239–259 (LFFLGEYANMILGSAMMTIFF), 275–295 (IPGLIWFVLKIVLLLFIFVWT), and 314–334 (VFLPISVLWVILISGVLLFTG).

Belongs to the complex I subunit 1 family. NDH-1 is composed of 14 different subunits. Subunits NuoA, H, J, K, L, M, N constitute the membrane sector of the complex.

Its subcellular location is the cell membrane. The enzyme catalyses a quinone + NADH + 5 H(+)(in) = a quinol + NAD(+) + 4 H(+)(out). Functionally, NDH-1 shuttles electrons from NADH, via FMN and iron-sulfur (Fe-S) centers, to quinones in the respiratory chain. The immediate electron acceptor for the enzyme in this species is believed to be ubiquinone. Couples the redox reaction to proton translocation (for every two electrons transferred, four hydrogen ions are translocated across the cytoplasmic membrane), and thus conserves the redox energy in a proton gradient. This subunit may bind ubiquinone. The chain is NADH-quinone oxidoreductase subunit H from Wolbachia sp. subsp. Brugia malayi (strain TRS).